Consider the following 467-residue polypeptide: tRNA-2-methylthio-N(6)-dimethylallyladenosine synthase (467 aa).

An MTTase N-terminal domain is found at 4-124 (RKLFIKSYGC…LPEMVAKVER (121 aa)). 6 residues coordinate [4Fe-4S] cluster: cysteine 13, cysteine 49, cysteine 87, cysteine 161, cysteine 165, and cysteine 168. The Radical SAM core domain maps to 147–379 (QAHGPSAFLS…QARLVEIQQA (233 aa)). The TRAM domain occupies 382–444 (QACVGRPMDV…SNSLAARLVE (63 aa)).

Belongs to the methylthiotransferase family. MiaB subfamily. As to quaternary structure, monomer. [4Fe-4S] cluster is required as a cofactor.

The protein resides in the cytoplasm. It catalyses the reaction N(6)-dimethylallyladenosine(37) in tRNA + (sulfur carrier)-SH + AH2 + 2 S-adenosyl-L-methionine = 2-methylsulfanyl-N(6)-dimethylallyladenosine(37) in tRNA + (sulfur carrier)-H + 5'-deoxyadenosine + L-methionine + A + S-adenosyl-L-homocysteine + 2 H(+). Its function is as follows. Catalyzes the methylthiolation of N6-(dimethylallyl)adenosine (i(6)A), leading to the formation of 2-methylthio-N6-(dimethylallyl)adenosine (ms(2)i(6)A) at position 37 in tRNAs that read codons beginning with uridine. In Rhodospirillum rubrum (strain ATCC 11170 / ATH 1.1.1 / DSM 467 / LMG 4362 / NCIMB 8255 / S1), this protein is tRNA-2-methylthio-N(6)-dimethylallyladenosine synthase.